The following is a 266-amino-acid chain: 3-methyl-2-oxobutanoate hydroxymethyltransferase (266 aa).

The Mg(2+) site is built by D43 and D82. Residues 43 to 44 (DS), D82, and K110 each bind 3-methyl-2-oxobutanoate. E112 contacts Mg(2+). The active-site Proton acceptor is E179.

It belongs to the PanB family. In terms of assembly, homodecamer; pentamer of dimers. Mg(2+) serves as cofactor.

The protein resides in the cytoplasm. It carries out the reaction 3-methyl-2-oxobutanoate + (6R)-5,10-methylene-5,6,7,8-tetrahydrofolate + H2O = 2-dehydropantoate + (6S)-5,6,7,8-tetrahydrofolate. It functions in the pathway cofactor biosynthesis; (R)-pantothenate biosynthesis; (R)-pantoate from 3-methyl-2-oxobutanoate: step 1/2. Its function is as follows. Catalyzes the reversible reaction in which hydroxymethyl group from 5,10-methylenetetrahydrofolate is transferred onto alpha-ketoisovalerate to form ketopantoate. This chain is 3-methyl-2-oxobutanoate hydroxymethyltransferase, found in Psychrobacter arcticus (strain DSM 17307 / VKM B-2377 / 273-4).